The chain runs to 130 residues: Small ribosomal subunit protein uS8 (130 aa).

The protein belongs to the universal ribosomal protein uS8 family. As to quaternary structure, part of the 30S ribosomal subunit.

In terms of biological role, one of the primary rRNA binding proteins, it binds directly to 16S rRNA central domain where it helps coordinate assembly of the platform of the 30S subunit. In Methanocella arvoryzae (strain DSM 22066 / NBRC 105507 / MRE50), this protein is Small ribosomal subunit protein uS8.